Reading from the N-terminus, the 513-residue chain is ATP synthase subunit alpha (513 aa).

169–176 (GDRQTGKT) provides a ligand contact to ATP.

This sequence belongs to the ATPase alpha/beta chains family. F-type ATPases have 2 components, CF(1) - the catalytic core - and CF(0) - the membrane proton channel. CF(1) has five subunits: alpha(3), beta(3), gamma(1), delta(1), epsilon(1). CF(0) has three main subunits: a(1), b(2) and c(9-12). The alpha and beta chains form an alternating ring which encloses part of the gamma chain. CF(1) is attached to CF(0) by a central stalk formed by the gamma and epsilon chains, while a peripheral stalk is formed by the delta and b chains.

It is found in the cell inner membrane. The catalysed reaction is ATP + H2O + 4 H(+)(in) = ADP + phosphate + 5 H(+)(out). Produces ATP from ADP in the presence of a proton gradient across the membrane. The alpha chain is a regulatory subunit. The chain is ATP synthase subunit alpha from Halorhodospira halophila (strain DSM 244 / SL1) (Ectothiorhodospira halophila (strain DSM 244 / SL1)).